Here is a 432-residue protein sequence, read N- to C-terminus: 3-phosphoshikimate 1-carboxyvinyltransferase (432 aa).

3-phosphoshikimate is bound by residues Lys-23, Ser-24, and Arg-28. Lys-23 serves as a coordination point for phosphoenolpyruvate. Residues Gly-95 and Arg-123 each contribute to the phosphoenolpyruvate site. 3-phosphoshikimate contacts are provided by Ser-167, Gln-169, Asp-317, and Lys-344. A phosphoenolpyruvate-binding site is contributed by Gln-169. Asp-317 acts as the Proton acceptor in catalysis. Residues Arg-348 and Arg-390 each contribute to the phosphoenolpyruvate site.

Belongs to the EPSP synthase family. Monomer.

The protein localises to the cytoplasm. The enzyme catalyses 3-phosphoshikimate + phosphoenolpyruvate = 5-O-(1-carboxyvinyl)-3-phosphoshikimate + phosphate. It functions in the pathway metabolic intermediate biosynthesis; chorismate biosynthesis; chorismate from D-erythrose 4-phosphate and phosphoenolpyruvate: step 6/7. Catalyzes the transfer of the enolpyruvyl moiety of phosphoenolpyruvate (PEP) to the 5-hydroxyl of shikimate-3-phosphate (S3P) to produce enolpyruvyl shikimate-3-phosphate and inorganic phosphate. The polypeptide is 3-phosphoshikimate 1-carboxyvinyltransferase (Staphylococcus aureus (strain bovine RF122 / ET3-1)).